Reading from the N-terminus, the 419-residue chain is Carboxypeptidase A2 (419 aa).

A signal peptide spans Met1–Cys18. The propeptide at Leu19–Arg114 is activation peptide. One can recognise a Peptidase M14 domain in the interval Ala122 to Val414. 2 residues coordinate Zn(2+): His179 and Glu182. Residues His179 to Glu182, Arg237, and Asn254 to Arg255 contribute to the substrate site. Cysteines 248 and 271 form a disulfide. Zn(2+) is bound at residue His306. Residue Ser307–Tyr308 coordinates substrate. An intrachain disulfide couples Cys320 to Cys354. Tyr358 serves as a coordination point for substrate. The active-site Proton donor/acceptor is Glu380.

It belongs to the peptidase M14 family. Requires Zn(2+) as cofactor.

The protein resides in the secreted. It carries out the reaction Similar to that of carboxypeptidase A (EC 3.4.17.1), but with a preference for bulkier C-terminal residues.. Carboxypeptidase that catalyzes the release of a C-terminal amino acid, with a preference for large aromatic C-terminal residues. The polypeptide is Carboxypeptidase A2 (CPA2) (Homo sapiens (Human)).